A 276-amino-acid chain; its full sequence is MGQKVNPHGFRLGITTDHVSHWFADSTKSGQRYKDFVREDIRIRQLMSTGMERAGIAKVEIERTRDRVRVDIHTARPGIVIGRRGAEADRIRGELEKLTGKQVQLNILEVKNPEMEAQLVAQGVAEQLTSRVAFRRAMKKAMQSAQRAGAKGIRIACSGRLGGAEMSRSEFYREGRVPLHTLRANIDYGFYEAKTTFGRIGVKVWIYKGDVTAKELAAQAASAPSRGPRSDRGGRPGGADRGDRRRRNDRPAADAAPAAEAPAVEAAPAAAEGGQA.

The KH type-2 domain occupies 43 to 111 (IRQLMSTGME…QVQLNILEVK (69 aa)). Residues 218-227 (AQAASAPSRG) are compositionally biased toward low complexity. Positions 218–276 (AQAASAPSRGPRSDRGGRPGGADRGDRRRRNDRPAADAAPAAEAPAVEAAPAAAEGGQA) are disordered. Basic and acidic residues predominate over residues 228-243 (PRSDRGGRPGGADRGD). Residues 253 to 276 (ADAAPAAEAPAVEAAPAAAEGGQA) are compositionally biased toward low complexity.

This sequence belongs to the universal ribosomal protein uS3 family. Part of the 30S ribosomal subunit. Forms a tight complex with proteins S10 and S14.

Functionally, binds the lower part of the 30S subunit head. Binds mRNA in the 70S ribosome, positioning it for translation. The protein is Small ribosomal subunit protein uS3 of Pseudarthrobacter chlorophenolicus (strain ATCC 700700 / DSM 12829 / CIP 107037 / JCM 12360 / KCTC 9906 / NCIMB 13794 / A6) (Arthrobacter chlorophenolicus).